Reading from the N-terminus, the 112-residue chain is Prothymosin alpha (112 aa).

Residue Met1 is modified to N-acetylmethionine. Residues 1–112 (MSDAAVDTSS…KKQKKTDEDD (112 aa)) are disordered. The residue at position 2 (Ser2) is an N-acetylserine; in Prothymosin alpha, N-terminally processed. Ser2 is modified (phosphoserine). Thr8 is subject to Phosphothreonine. Residues Ser9 and Ser10 each carry the phosphoserine modification. Residues Thr13 and Thr14 each carry the phosphothreonine modification. A compositionally biased stretch (basic and acidic residues) spans 13–31 (TTKDLKEKKEVVEEAENGR). Position 15 is an N6-acetyllysine; alternate (Lys15). Residue Lys15 is modified to N6-succinyllysine; alternate. The segment covering 43–84 (ENGEQEADNEVDEEEEEGGEEEEEEEEGDGEEEDGDEDEEAE) has biased composition (acidic residues). Basic and acidic residues predominate over residues 101–112 (ETKKQKKTDEDD). Thr102 carries the post-translational modification Phosphothreonine. At Lys103 the chain carries N6-acetyllysine; alternate. Residue Lys103 forms a Glycyl lysine isopeptide (Lys-Gly) (interchain with G-Cter in SUMO2); alternate linkage. A Phosphothreonine modification is found at Thr108.

Belongs to the pro/parathymosin family. Interacts with NUPR1; regulates apoptotic process. Post-translationally, covalently linked to a small RNA of about 20 nucleotides.

The protein localises to the nucleus. Its function is as follows. Prothymosin alpha may mediate immune function by conferring resistance to certain opportunistic infections. The chain is Prothymosin alpha (Ptma) from Rattus norvegicus (Rat).